Reading from the N-terminus, the 215-residue chain is Pyrrolidone-carboxylate peptidase (215 aa).

Active-site residues include glutamate 80, cysteine 143, and histidine 167.

Belongs to the peptidase C15 family. Homotetramer.

Its subcellular location is the cytoplasm. It carries out the reaction Release of an N-terminal pyroglutamyl group from a polypeptide, the second amino acid generally not being Pro.. Removes 5-oxoproline from various penultimate amino acid residues except L-proline. In Brevibacillus brevis (strain 47 / JCM 6285 / NBRC 100599), this protein is Pyrrolidone-carboxylate peptidase.